The primary structure comprises 150 residues: Transcriptional repressor NrdR (150 aa).

Residues 3–34 fold into a zinc finger; that stretch reads CPFCQHDHSKVIDSRVIDAGSAIRRRRECSKC. The ATP-cone domain maps to 46-136; sequence LLVVKRNGVT…VYKSFDSADD (91 aa).

The protein belongs to the NrdR family. The cofactor is Zn(2+).

Its function is as follows. Negatively regulates transcription of bacterial ribonucleotide reductase nrd genes and operons by binding to NrdR-boxes. This chain is Transcriptional repressor NrdR, found in Corynebacterium glutamicum (strain ATCC 13032 / DSM 20300 / JCM 1318 / BCRC 11384 / CCUG 27702 / LMG 3730 / NBRC 12168 / NCIMB 10025 / NRRL B-2784 / 534).